The sequence spans 322 residues: Probable 5-dehydro-4-deoxyglucarate dehydratase 2 (322 aa).

This sequence belongs to the DapA family.

The enzyme catalyses 5-dehydro-4-deoxy-D-glucarate + H(+) = 2,5-dioxopentanoate + CO2 + H2O. It participates in carbohydrate acid metabolism; D-glucarate degradation; 2,5-dioxopentanoate from D-glucarate: step 2/2. The polypeptide is Probable 5-dehydro-4-deoxyglucarate dehydratase 2 (Streptomyces coelicolor (strain ATCC BAA-471 / A3(2) / M145)).